Here is a 362-residue protein sequence, read N- to C-terminus: UDP-3-O-acylglucosamine N-acyltransferase (362 aa).

His-251 serves as the catalytic Proton acceptor.

The protein belongs to the transferase hexapeptide repeat family. LpxD subfamily. In terms of assembly, homotrimer.

The enzyme catalyses a UDP-3-O-[(3R)-3-hydroxyacyl]-alpha-D-glucosamine + a (3R)-hydroxyacyl-[ACP] = a UDP-2-N,3-O-bis[(3R)-3-hydroxyacyl]-alpha-D-glucosamine + holo-[ACP] + H(+). The protein operates within bacterial outer membrane biogenesis; LPS lipid A biosynthesis. Functionally, catalyzes the N-acylation of UDP-3-O-acylglucosamine using 3-hydroxyacyl-ACP as the acyl donor. Is involved in the biosynthesis of lipid A, a phosphorylated glycolipid that anchors the lipopolysaccharide to the outer membrane of the cell. The chain is UDP-3-O-acylglucosamine N-acyltransferase from Cupriavidus pinatubonensis (strain JMP 134 / LMG 1197) (Cupriavidus necator (strain JMP 134)).